A 554-amino-acid polypeptide reads, in one-letter code: Asparagine--tRNA ligase, cytoplasmic (554 aa).

The protein belongs to the class-II aminoacyl-tRNA synthetase family.

The protein resides in the cytoplasm. It is found in the cytosol. It carries out the reaction tRNA(Asn) + L-asparagine + ATP = L-asparaginyl-tRNA(Asn) + AMP + diphosphate + H(+). Catalyzes the attachment of asparagine to tRNA(Asn) in a two-step reaction: asparagine is first activated by ATP to form Asn-AMP and then transferred to the acceptor end of tRNA(Asn). The polypeptide is Asparagine--tRNA ligase, cytoplasmic (Saccharomyces cerevisiae (strain ATCC 204508 / S288c) (Baker's yeast)).